Consider the following 442-residue polypeptide: Putative amino acid transporter YuiF (442 aa).

11 helical membrane-spanning segments follow: residues 21-41 (IVIA…LGLG), 51-71 (LGGN…AAAL), 103-123 (LIVL…PVHI), 146-166 (LIAC…PVGF), 190-210 (IPYA…LSVI), 236-256 (IGIA…LSQT), 259-279 (VEGM…SGVM), 292-312 (MVLM…SNVL), 335-355 (LGAL…GSSF), 364-384 (IFVP…AIIG), and 421-441 (VPTF…AALV).

The protein resides in the cell membrane. This chain is Putative amino acid transporter YuiF (yuiF), found in Bacillus subtilis (strain 168).